Here is a 361-residue protein sequence, read N- to C-terminus: UDP-3-O-acylglucosamine N-acyltransferase (361 aa).

Histidine 264 acts as the Proton acceptor in catalysis.

Belongs to the transferase hexapeptide repeat family. LpxD subfamily. In terms of assembly, homotrimer.

The enzyme catalyses a UDP-3-O-[(3R)-3-hydroxyacyl]-alpha-D-glucosamine + a (3R)-hydroxyacyl-[ACP] = a UDP-2-N,3-O-bis[(3R)-3-hydroxyacyl]-alpha-D-glucosamine + holo-[ACP] + H(+). The protein operates within bacterial outer membrane biogenesis; LPS lipid A biosynthesis. In terms of biological role, catalyzes the N-acylation of UDP-3-O-acylglucosamine using 3-hydroxyacyl-ACP as the acyl donor. Is involved in the biosynthesis of lipid A, a phosphorylated glycolipid that anchors the lipopolysaccharide to the outer membrane of the cell. The polypeptide is UDP-3-O-acylglucosamine N-acyltransferase (Bordetella avium (strain 197N)).